A 256-amino-acid polypeptide reads, in one-letter code: Alcohol dehydrogenase (256 aa).

12 to 41 (FVAGLGGIGLDTTKELLKRDLKNLVILDRI) lines the NAD(+) pocket. Ser-140 contributes to the substrate binding site. The active-site Proton acceptor is the Tyr-153.

This sequence belongs to the short-chain dehydrogenases/reductases (SDR) family. As to quaternary structure, homodimer.

It carries out the reaction a primary alcohol + NAD(+) = an aldehyde + NADH + H(+). The enzyme catalyses a secondary alcohol + NAD(+) = a ketone + NADH + H(+). In Drosophila ananassae (Fruit fly), this protein is Alcohol dehydrogenase.